The primary structure comprises 867 residues: Nuclear body protein SP140 (867 aa).

The 117-residue stretch at valine 22–tyrosine 138 folds into the HSR domain. Disordered stretches follow at residues threonine 260–glutamine 341, threonine 365–leucine 432, and isoleucine 486–aspartate 580. Positions lysine 268 to aspartate 301 are enriched in basic and acidic residues. 2 stretches are compositionally biased toward acidic residues: residues glutamate 323 to glutamine 341 and glutamate 384 to aspartate 397. The span at alanine 404 to serine 416 shows a compositional bias: low complexity. Basic residues-rich tracts occupy residues lysine 494–methionine 512 and glutamine 567–lysine 577. The short motif at proline 495–arginine 514 is the Nuclear localization signal element. Residues aspartate 580 to proline 661 enclose the SAND domain. The segment at leucine 690–lysine 736 adopts a PHD-type zinc-finger fold. Threonine 726 carries the phosphothreonine modification. The 104-residue stretch at glutamine 754–valine 857 folds into the Bromo domain.

In terms of assembly, interacts with PIN1. Phosphorylation at Thr-726 promotes binding of PIN1 and subsequent isomerization of Pro-727. As to expression, high levels in spleen and peripheral blood leukocytes, much lower levels in tonsils, thymus, prostate, ovary, small intestine, and colon. Very low levels in heart, brain, placenta, lung, liver, skeletal muscle, kidney, and pancreas. Not detected in brain, liver and muscle.

Its subcellular location is the nucleus. It is found in the PML body. It localises to the cytoplasm. Functionally, component of the nuclear body, also known as nuclear domain 10, PML oncogenic domain, and KR body. May be involved in the pathogenesis of acute promyelocytic leukemia and viral infection. May play a role in chromatin-mediated regulation of gene expression although it does not bind to histone H3 tails. This is Nuclear body protein SP140 from Homo sapiens (Human).